The following is a 330-amino-acid chain: Holliday junction branch migration complex subunit RuvB (330 aa).

A large ATPase domain (RuvB-L) region spans residues 1–181; that stretch reads MEDRLVGCRL…FGVINKLELY (181 aa). ATP-binding positions include Leu-20, Arg-21, Gly-62, Lys-65, Thr-66, Thr-67, 128–130, Arg-171, Tyr-181, and Arg-218; that span reads EDY. Thr-66 contacts Mg(2+). A small ATPAse domain (RuvB-S) region spans residues 182–252; sequence SVEELGQIVK…IARTGLEALE (71 aa). The interval 255–330 is head domain (RuvB-H); it reads EIGLDAVDRN…AYEHFGLKYE (76 aa). DNA is bound by residues Lys-310 and Arg-315.

The protein belongs to the RuvB family. As to quaternary structure, homohexamer. Forms an RuvA(8)-RuvB(12)-Holliday junction (HJ) complex. HJ DNA is sandwiched between 2 RuvA tetramers; dsDNA enters through RuvA and exits via RuvB. An RuvB hexamer assembles on each DNA strand where it exits the tetramer. Each RuvB hexamer is contacted by two RuvA subunits (via domain III) on 2 adjacent RuvB subunits; this complex drives branch migration. In the full resolvosome a probable DNA-RuvA(4)-RuvB(12)-RuvC(2) complex forms which resolves the HJ.

It localises to the cytoplasm. The enzyme catalyses ATP + H2O = ADP + phosphate + H(+). The RuvA-RuvB-RuvC complex processes Holliday junction (HJ) DNA during genetic recombination and DNA repair, while the RuvA-RuvB complex plays an important role in the rescue of blocked DNA replication forks via replication fork reversal (RFR). RuvA specifically binds to HJ cruciform DNA, conferring on it an open structure. The RuvB hexamer acts as an ATP-dependent pump, pulling dsDNA into and through the RuvAB complex. RuvB forms 2 homohexamers on either side of HJ DNA bound by 1 or 2 RuvA tetramers; 4 subunits per hexamer contact DNA at a time. Coordinated motions by a converter formed by DNA-disengaged RuvB subunits stimulates ATP hydrolysis and nucleotide exchange. Immobilization of the converter enables RuvB to convert the ATP-contained energy into a lever motion, pulling 2 nucleotides of DNA out of the RuvA tetramer per ATP hydrolyzed, thus driving DNA branch migration. The RuvB motors rotate together with the DNA substrate, which together with the progressing nucleotide cycle form the mechanistic basis for DNA recombination by continuous HJ branch migration. Branch migration allows RuvC to scan DNA until it finds its consensus sequence, where it cleaves and resolves cruciform DNA. The chain is Holliday junction branch migration complex subunit RuvB from Acetivibrio thermocellus (strain ATCC 27405 / DSM 1237 / JCM 9322 / NBRC 103400 / NCIMB 10682 / NRRL B-4536 / VPI 7372) (Clostridium thermocellum).